The following is a 101-amino-acid chain: Apolipoprotein C-II (101 aa).

Positions 1-22 (MGIRYLLVLVLVLLVLGCEVQG) are cleaved as a signal peptide. A lipid binding region spans residues 66–74 (TMDEKIREI). The tract at residues 78–101 (STAAVSTYAGIFTDQLLSMLKGDQ) is lipoprotein lipase cofactor.

This sequence belongs to the apolipoprotein C2 family. In terms of processing, proapolipoprotein C-II is synthesized as a sialic acid containing glycoprotein which is subsequently desialylated prior to its proteolytic processing. Post-translationally, proapolipoprotein C-II, the major form found in plasma undergoes proteolytic cleavage of its N-terminal hexapeptide to generate apolipoprotein C-II, which occurs as the minor form in plasma.

The protein resides in the secreted. Its function is as follows. Component of chylomicrons, very low-density lipoproteins (VLDL), low-density lipoproteins (LDL), and high-density lipoproteins (HDL) in plasma. Plays an important role in lipoprotein metabolism as an activator of lipoprotein lipase. Both proapolipoprotein C-II and apolipoprotein C-II can activate lipoprotein lipase. In Phoca vitulina (Harbor seal), this protein is Apolipoprotein C-II (APOC2).